We begin with the raw amino-acid sequence, 69 residues long: DNA-directed RNA polymerase subunit omega (69 aa).

Belongs to the RNA polymerase subunit omega family. The RNAP catalytic core consists of 2 alpha, 1 beta, 1 beta' and 1 omega subunit. When a sigma factor is associated with the core the holoenzyme is formed, which can initiate transcription.

The catalysed reaction is RNA(n) + a ribonucleoside 5'-triphosphate = RNA(n+1) + diphosphate. In terms of biological role, promotes RNA polymerase assembly. Latches the N- and C-terminal regions of the beta' subunit thereby facilitating its interaction with the beta and alpha subunits. This is DNA-directed RNA polymerase subunit omega from Carboxydothermus hydrogenoformans (strain ATCC BAA-161 / DSM 6008 / Z-2901).